A 396-amino-acid chain; its full sequence is Putative pyridoxal phosphate-dependent acyltransferase (396 aa).

Residue 111 to 112 (GF) coordinates pyridoxal 5'-phosphate. Substrate is bound at residue histidine 136. Pyridoxal 5'-phosphate contacts are provided by residues serine 186, 211–214 (DDAH), and 241–244 (TLSK). Lysine 244 is modified (N6-(pyridoxal phosphate)lysine). Threonine 358 is a substrate binding site.

It belongs to the class-II pyridoxal-phosphate-dependent aminotransferase family. Homodimer. Pyridoxal 5'-phosphate is required as a cofactor.

This Bacillus cereus (strain ATCC 14579 / DSM 31 / CCUG 7414 / JCM 2152 / NBRC 15305 / NCIMB 9373 / NCTC 2599 / NRRL B-3711) protein is Putative pyridoxal phosphate-dependent acyltransferase.